The following is a 538-amino-acid chain: Lipid scramblase CLPTM1L (538 aa).

The Cytoplasmic portion of the chain corresponds to 1 to 10 (MWSGRSSFTS). The helical transmembrane segment at 11-31 (LVVGVFVVYVVHTCWVMYGIV) threads the bilayer. Residues 32–284 (YTRPCSGDAN…VKGIFVDTNL (253 aa)) are Extracellular-facing. Residues N91 and N101 are each glycosylated (N-linked (GlcNAc...) asparagine). Residues 285-305 (YFLALTFFVAAFHLLFDFLAF) traverse the membrane as a helical segment. The Cytoplasmic portion of the chain corresponds to 306-324 (KNDISFWKKKKSMIGMSTK). Residues 325 to 342 (AVLWRCFSTVVIFLFLLD) traverse the membrane as a helical segment. Residues 343–346 (EQTS) lie on the Extracellular side of the membrane. A helical membrane pass occupies residues 347–364 (LLVLVPAGVGAAIELWKV). Topologically, residues 365–402 (KKALKMTILWRGLMPEFELGTYSESERKTEEYDTQAMK) are cytoplasmic. The helical transmembrane segment at 403-423 (YLSYLLYPLCVGGAVYSLLNI) threads the bilayer. Topologically, residues 424–428 (KYKSW) are extracellular. The helical transmembrane segment at 429 to 449 (YSWLINSFVNGVYAFGFLFML) threads the bilayer. Residues 450 to 538 (PQLFVNYKLK…EKAARAPHTD (89 aa)) are Cytoplasmic-facing.

The protein belongs to the CLPTM1 family.

The protein localises to the endoplasmic reticulum membrane. The catalysed reaction is a 6-(alpha-D-glucosaminyl)-1-(1,2-diacyl-sn-glycero-3-phospho)-1D-myo-inositol(in) = a 6-(alpha-D-glucosaminyl)-1-(1,2-diacyl-sn-glycero-3-phospho)-1D-myo-inositol(out). The enzyme catalyses 6-(alpha-D-glucosaminyl)-(1-octadecanoyl,2-(9Z)-octadecenoyl-sn-glycero-3-phospho)-1D-myo-inositol(in) = 6-(alpha-D-glucosaminyl)-(1-octadecanoyl,2-(9Z)-octadecenoyl-sn-glycero-3-phospho)-1D-myo-inositol(out). It catalyses the reaction a 1,2-diacyl-sn-glycero-3-phospho-(1D-myo-inositol)(in) = a 1,2-diacyl-sn-glycero-3-phospho-(1D-myo-inositol)(out). It carries out the reaction a 1,2-diacyl-sn-glycero-3-phosphocholine(in) = a 1,2-diacyl-sn-glycero-3-phosphocholine(out). The catalysed reaction is a 1,2-diacyl-sn-glycero-3-phosphoethanolamine(in) = a 1,2-diacyl-sn-glycero-3-phosphoethanolamine(out). In terms of biological role, scramblase that mediates the translocation of glucosaminylphosphatidylinositol (alpha-D-GlcN-(1-6)-(1,2-diacyl-sn-glycero-3-phospho)-1D-myo-inositol, GlcN-PI) across the endoplasmic reticulum (ER) membrane, from the cytosolic leaflet to the luminal leaflet of the ER membrane, where it participates in the biosynthesis of glycosylphosphatidylinositol (GPI). GPI is a lipid glycoconjugate involved in post-translational modification of proteins. Can also translocate 1,2-diacyl-sn-glycero-3-phospho-(1D-myo-inositol) (phosphatidylinositol or PI), as well as several other phospholipids (1,2-diacyl-sn-glycero-3-phosphocholine, 1,2-diacyl-sn-glycero-3-phosphoethanolamine), and N-acetylglucosaminylphosphatidylinositol (GlcNAc-PI) in vitro. The sequence is that of Lipid scramblase CLPTM1L (CLPTM1L) from Pongo abelii (Sumatran orangutan).